Consider the following 217-residue polypeptide: 3-isopropylmalate dehydratase small subunit (217 aa).

This sequence belongs to the LeuD family. LeuD type 1 subfamily. Heterodimer of LeuC and LeuD.

It carries out the reaction (2R,3S)-3-isopropylmalate = (2S)-2-isopropylmalate. It functions in the pathway amino-acid biosynthesis; L-leucine biosynthesis; L-leucine from 3-methyl-2-oxobutanoate: step 2/4. In terms of biological role, catalyzes the isomerization between 2-isopropylmalate and 3-isopropylmalate, via the formation of 2-isopropylmaleate. This is 3-isopropylmalate dehydratase small subunit from Paraburkholderia phymatum (strain DSM 17167 / CIP 108236 / LMG 21445 / STM815) (Burkholderia phymatum).